Here is a 158-residue protein sequence, read N- to C-terminus: Pathogenesis-related protein 2 (158 aa).

It belongs to the BetVI family.

The sequence is that of Pathogenesis-related protein 2 (PR2) from Petroselinum crispum (Parsley).